The primary structure comprises 460 residues: Carboxypeptidase DacB (460 aa).

The signal sequence occupies residues 1–28; sequence MRPTRWRRSTHVAVGVAVLALVVAVVAA. The interval 39-64 is disordered; the sequence is AAEAVPPAPPPATADPGVVPVDLSAP. Residue S113 is the Acyl-ester intermediate of the active site. K116 (proton acceptor) is an active-site residue. S294 is an active-site residue.

The protein belongs to the peptidase S13 family.

Carboxypeptidase that cleaves terminal D-alanine from peptidoglycan in the mycobacterial cell wall. May cleave L-Lys-D-Ala and/or D-Ala-D-Ala peptide bonds. Exerts important effects on mycobacterial cell morphology and cell division. This Mycolicibacterium smegmatis (strain ATCC 700084 / mc(2)155) (Mycobacterium smegmatis) protein is Carboxypeptidase DacB.